Here is a 616-residue protein sequence, read N- to C-terminus: Kelch-like protein 36 (616 aa).

The BTB domain occupies 46 to 113 (CDVVLVADEQ…LYGGELVLDG (68 aa)). One can recognise a BACK domain in the interval 148-250 (YLYLQELASI…PKNDLLHRVK (103 aa)). 6 Kelch repeats span residues 296–345 (CLLF…VLGG), 346–397 (FIFI…SIED), 398–444 (MLVA…IYKD), 446–493 (VYIS…SLGD), 494–546 (SIYS…VWEG), and 547–595 (RIYI…VCAL).

As to quaternary structure, interacts with CUL3.

It functions in the pathway protein modification; protein ubiquitination. In terms of biological role, probable substrate-specific adapter of an E3 ubiquitin-protein ligase complex which mediates the ubiquitination and subsequent proteasomal degradation of target proteins. The sequence is that of Kelch-like protein 36 (KLHL36) from Bos taurus (Bovine).